The chain runs to 183 residues: Phosphinothricin N-acetyltransferase (183 aa).

The region spanning 8 to 173 is the N-acetyltransferase domain; the sequence is ADIRRATEAD…WQLDFSLPVP (166 aa). Residues 91 to 93, 99 to 104, and N130 contribute to the acetyl-CoA site; these read VYV and RTGLGS.

It belongs to the acetyltransferase family. PAT/BAR subfamily.

The catalysed reaction is phosphinothricin + acetyl-CoA = N-acetylphosphinothricin + CoA + H(+). Its function is as follows. Inactivates phosphinothricin (PPT) by transfer of an acetyl group from acetyl CoA. Can also acetylate demethylphosphinothricin but not PTT or glutamate. This enzyme is an effector of phosphinothricin tripeptide (PTT or bialaphos) resistance. The protein is Phosphinothricin N-acetyltransferase of Streptomyces hygroscopicus.